Consider the following 338-residue polypeptide: GTPase Obg (338 aa).

The Obg domain maps to 1–159; that stretch reads MKFVDSASVF…FTLDLELKLM (159 aa). The segment at 123–145 is disordered; it reads GGRGNQHFATSTHQAPRHAEPGQ. One can recognise an OBG-type G domain in the interval 160–323; sequence ADVGLVGFPN…LKDALWRIIV (164 aa). GTP contacts are provided by residues 166–173, 191–195, 213–216, 280–283, and 304–306; these read GFPNAGKS, FTTLV, DIPG, TKMD, and SAV. Residues Ser173 and Thr193 each coordinate Mg(2+).

Belongs to the TRAFAC class OBG-HflX-like GTPase superfamily. OBG GTPase family. Monomer. Mg(2+) serves as cofactor.

The protein localises to the cytoplasm. An essential GTPase which binds GTP, GDP and possibly (p)ppGpp with moderate affinity, with high nucleotide exchange rates and a fairly low GTP hydrolysis rate. Plays a role in control of the cell cycle, stress response, ribosome biogenesis and in those bacteria that undergo differentiation, in morphogenesis control. The polypeptide is GTPase Obg (Chlorobium chlorochromatii (strain CaD3)).